Reading from the N-terminus, the 352-residue chain is tRNA-specific 2-thiouridylase MnmA (352 aa).

Residues 6 to 13 (AMSGGVDS) and leucine 32 each bind ATP. Cysteine 101 functions as the Nucleophile in the catalytic mechanism. Cysteine 101 and cysteine 194 are disulfide-bonded. Residue glycine 125 participates in ATP binding. An interaction with tRNA region spans residues 144–146 (KDQ). The active-site Cysteine persulfide intermediate is the cysteine 194.

It belongs to the MnmA/TRMU family.

The protein localises to the cytoplasm. It carries out the reaction S-sulfanyl-L-cysteinyl-[protein] + uridine(34) in tRNA + AH2 + ATP = 2-thiouridine(34) in tRNA + L-cysteinyl-[protein] + A + AMP + diphosphate + H(+). Its function is as follows. Catalyzes the 2-thiolation of uridine at the wobble position (U34) of tRNA, leading to the formation of s(2)U34. This Frankia casuarinae (strain DSM 45818 / CECT 9043 / HFP020203 / CcI3) protein is tRNA-specific 2-thiouridylase MnmA.